The primary structure comprises 407 residues: Steroid 3-ketoacyl-CoA thiolase FadA6 (407 aa).

The active-site Acyl-thioester intermediate is the cysteine 110. CoA is bound by residues glutamine 178, 237 to 239 (RES), and serine 262. Residues histidine 363 and cysteine 393 each act as proton acceptor in the active site. Substrate is bound at residue glycine 395.

Belongs to the thiolase-like superfamily. Thiolase family.

It carries out the reaction an acyl-CoA + acetyl-CoA = a 3-oxoacyl-CoA + CoA. The enzyme catalyses 6-methyl-3,7-dioxodecanedioyl-CoA + CoA = 4-methyl-5-oxo-octanedioyl-CoA + acetyl-CoA. It functions in the pathway steroid metabolism; cholesterol degradation. Functionally, may be involved in the final steps of cholesterol and steroid degradation. Catalyzes the formation of 4-methyl-5-oxo-octanedioyl-CoA (MOODA-CoA) and acetyl-CoA from 6-methyl-3,7-dioxodecanedioyl-CoA (MeDODA-CoA) and coenzyme A. In Mycobacterium tuberculosis (strain ATCC 25618 / H37Rv), this protein is Steroid 3-ketoacyl-CoA thiolase FadA6.